A 257-amino-acid polypeptide reads, in one-letter code: MQKMTIKEAENVLKEIMNEEDDRFQLLMKDERKGVQKLVLKWYKQKELEQKEKENFFEMSKYENALREKGVTYIAGIDEVGRGPLAGPVVTAAVVLPEDFYIPGLNDSKKLSEAKRERFYDEIKVQAIAIGVGIVSPQVIDDINIYQATKQAMLDAVANLSCTPQHLLIDAMKLPTPIPQTSIIKGDAKSISISAASIIAKVTRDRMMKELGEKYPEYGFEQHMGYGTKQHLEAIEVHGVLDEHRKSFAPIKDMIQK.

The RNase H type-2 domain maps to T72–K257. The a divalent metal cation site is built by D78, E79, and D170.

Belongs to the RNase HII family. Mn(2+) serves as cofactor. Mg(2+) is required as a cofactor.

It is found in the cytoplasm. The catalysed reaction is Endonucleolytic cleavage to 5'-phosphomonoester.. Functionally, endonuclease that specifically degrades the RNA of RNA-DNA hybrids. The chain is Ribonuclease HII from Bacillus cereus (strain G9842).